Here is a 237-residue protein sequence, read N- to C-terminus: Phosphoribosylaminoimidazole-succinocarboxamide synthase (237 aa).

The protein belongs to the SAICAR synthetase family.

The catalysed reaction is 5-amino-1-(5-phospho-D-ribosyl)imidazole-4-carboxylate + L-aspartate + ATP = (2S)-2-[5-amino-1-(5-phospho-beta-D-ribosyl)imidazole-4-carboxamido]succinate + ADP + phosphate + 2 H(+). It participates in purine metabolism; IMP biosynthesis via de novo pathway; 5-amino-1-(5-phospho-D-ribosyl)imidazole-4-carboxamide from 5-amino-1-(5-phospho-D-ribosyl)imidazole-4-carboxylate: step 1/2. This is Phosphoribosylaminoimidazole-succinocarboxamide synthase from Klebsiella pneumoniae (strain 342).